The primary structure comprises 66 residues: Large ribosomal subunit protein bL35 (66 aa).

The span at Met1–Arg26 shows a compositional bias: basic residues. 2 disordered regions span residues Met1–Tyr28 and Lys36–Gln55.

Belongs to the bacterial ribosomal protein bL35 family.

This chain is Large ribosomal subunit protein bL35, found in Macrococcus caseolyticus (strain JCSC5402) (Macrococcoides caseolyticum).